The following is a 417-amino-acid chain: Hydroxysqualene dehydroxylase (417 aa).

It belongs to the HpnE family.

It carries out the reaction squalene + FAD + H2O + H(+) = hydroxysqualene + FADH2. It participates in secondary metabolite biosynthesis; hopanoid biosynthesis. Its function is as follows. Involved in the biosynthesis of the hopanoid precursor squalene (SQ) from farnesyl diphosphate (FPP). Catalyzes the third (last) step, the reduction of hydroxysqualene (HSQ) to SQ. This is Hydroxysqualene dehydroxylase from Sinorhizobium fredii (strain NBRC 101917 / NGR234).